The following is a 912-amino-acid chain: uncharacterized protein (912 aa).

Composition is skewed to basic and acidic residues over residues 20–32 (IERL…AEPA) and 39–67 (HEYE…EDKT). Residues 20-91 (IERLREQGRA…KPTLPQPETD (72 aa)) are disordered. Residues 68–77 (RHKKLKHRSR) are compositionally biased toward basic residues.

This is an uncharacterized protein from Penicillium chrysogenum virus (isolate Caston/2003) (PcV).